A 172-amino-acid polypeptide reads, in one-letter code: MISPLFFASEGGFGLNLDLFDANIVNLAIVIFGLYKFLPPFIGGILERRRVAIMADLQDSEDRLLKATEALAAAKKDLAAAHQKAEQIREDCKLRAEAIRLDSEKRTVEEMARVKQGATADLNAEASRASAQLRREAARMAIENALSALPGKLNTEAQSKLVSQSIKNLGEA.

A helical transmembrane segment spans residues 27-47 (LAIVIFGLYKFLPPFIGGILE).

Belongs to the ATPase B chain family. F-type ATPases have 2 components, F(1) - the catalytic core - and F(0) - the membrane proton channel. F(1) has five subunits: alpha(3), beta(3), gamma(1), delta(1), epsilon(1). F(0) has four main subunits: a(1), b(1), b'(1) and c(10-14). The alpha and beta chains form an alternating ring which encloses part of the gamma chain. F(1) is attached to F(0) by a central stalk formed by the gamma and epsilon chains, while a peripheral stalk is formed by the delta, b and b' chains.

The protein resides in the cellular thylakoid membrane. In terms of biological role, f(1)F(0) ATP synthase produces ATP from ADP in the presence of a proton or sodium gradient. F-type ATPases consist of two structural domains, F(1) containing the extramembraneous catalytic core and F(0) containing the membrane proton channel, linked together by a central stalk and a peripheral stalk. During catalysis, ATP synthesis in the catalytic domain of F(1) is coupled via a rotary mechanism of the central stalk subunits to proton translocation. Its function is as follows. Component of the F(0) channel, it forms part of the peripheral stalk, linking F(1) to F(0). This is ATP synthase subunit b from Prochlorococcus marinus (strain MIT 9313).